Here is a 284-residue protein sequence, read N- to C-terminus: Cystinosin homolog (284 aa).

Transmembrane regions (helical) follow at residues 3–23, 37–57, 86–106, 116–136, 139–159, 181–201, and 216–236; these read ALSIISIIIGWIYFACWSLSF, IGLSFDFLLFNITGYACYSVF, IAFAIHGFVLTAITIIQCFIY, LGIGIATLIWVSLIVMTILGF, VFTWLWVINYYSYVKLFITFI, NVLLDFSGGVLSLLQMFLDVA, and LGLSLFSIAFDILFIIQHYIL. Residues 4–70 form the PQ-loop 1 domain; sequence LSIISIIIGW…LYFDKLVKNE (67 aa). The PQ-loop 2 domain occupies 154-208; it reads LFITFIKYIPQAYLNFKNKSTSGWSVHNVLLDFSGGVLSLLQMFLDVADSGNWNI. The segment at 247-269 is disordered; sequence NLNDNNIPNNNNNNNNNINNNTP.

Belongs to the cystinosin family.

Its subcellular location is the lysosome membrane. It carries out the reaction L-cystine(out) + H(+)(out) = L-cystine(in) + H(+)(in). Its function is as follows. Cystine/H(+) symporter that mediates export of cystine, the oxidized dimer of cysteine, from lysosomes. The chain is Cystinosin homolog (ctns) from Dictyostelium discoideum (Social amoeba).